Here is a 342-residue protein sequence, read N- to C-terminus: Protein-glutamate methylesterase/protein-glutamine glutaminase 1 (342 aa).

The region spanning 3–121 is the Response regulatory domain; the sequence is RVLVIDDSLF…NIREIGGELK (119 aa). Asp-54 carries the post-translational modification 4-aspartylphosphate. The region spanning 141–340 is the CheB-type methylesterase domain; it reads DSNARNVVLI…EKIVETIRAM (200 aa). Active-site residues include Ser-153, His-180, and Asp-282.

The protein belongs to the CheB family. In terms of processing, phosphorylated by CheA. Phosphorylation of the N-terminal regulatory domain activates the methylesterase activity.

The protein localises to the cytoplasm. It carries out the reaction [protein]-L-glutamate 5-O-methyl ester + H2O = L-glutamyl-[protein] + methanol + H(+). It catalyses the reaction L-glutaminyl-[protein] + H2O = L-glutamyl-[protein] + NH4(+). Its function is as follows. Involved in chemotaxis. Part of a chemotaxis signal transduction system that modulates chemotaxis in response to various stimuli. Catalyzes the demethylation of specific methylglutamate residues introduced into the chemoreceptors (methyl-accepting chemotaxis proteins or MCP) by CheR. Also mediates the irreversible deamidation of specific glutamine residues to glutamic acid. The polypeptide is Protein-glutamate methylesterase/protein-glutamine glutaminase 1 (Methanospirillum hungatei JF-1 (strain ATCC 27890 / DSM 864 / NBRC 100397 / JF-1)).